The primary structure comprises 330 residues: 2-methoxy-6-polyprenyl-1,4-benzoquinol methylase, mitochondrial (330 aa).

The transit peptide at 1-42 (MAAPRSWALWSFCGCGWSRAVSGCRLPGLRSSSPRGPLGARL) directs the protein to the mitochondrion. Residues Thr-117, Asp-171, and 199 to 200 (DA) contribute to the S-adenosyl-L-methionine site.

This sequence belongs to the class I-like SAM-binding methyltransferase superfamily. MenG/UbiE family. In terms of assembly, component of a multi-subunit COQ enzyme complex, composed of at least COQ3, COQ4, COQ5, COQ6, COQ7 and COQ9. Interacts with PYURF; the interaction is direct, stabilizes COQ5 protein and associates PYURF with COQ enzyme complex.

It is found in the mitochondrion inner membrane. It catalyses the reaction 2-methoxy-6-(all-trans-decaprenyl)benzene-1,4-diol + S-adenosyl-L-methionine = 5-methoxy-2-methyl-3-(all-trans-decaprenyl)benzene-1,4-diol + S-adenosyl-L-homocysteine + H(+). It functions in the pathway cofactor biosynthesis; ubiquinone biosynthesis. Its function is as follows. Methyltransferase required for the conversion of 2-decaprenyl-6-methoxy-1,4-benzoquinol (DDMQH2) to 2-decaprenyl-3-methyl-6-methoxy-1,4-benzoquinol (DMQH2). The protein is 2-methoxy-6-polyprenyl-1,4-benzoquinol methylase, mitochondrial of Bos taurus (Bovine).